Consider the following 223-residue polypeptide: Deoxyribose-phosphate aldolase (223 aa).

Catalysis depends on Asp-89, which acts as the Proton donor/acceptor. The Schiff-base intermediate with acetaldehyde role is filled by Lys-152. Lys-181 serves as the catalytic Proton donor/acceptor.

Belongs to the DeoC/FbaB aldolase family. DeoC type 1 subfamily.

It localises to the cytoplasm. It catalyses the reaction 2-deoxy-D-ribose 5-phosphate = D-glyceraldehyde 3-phosphate + acetaldehyde. It functions in the pathway carbohydrate degradation; 2-deoxy-D-ribose 1-phosphate degradation; D-glyceraldehyde 3-phosphate and acetaldehyde from 2-deoxy-alpha-D-ribose 1-phosphate: step 2/2. Its function is as follows. Catalyzes a reversible aldol reaction between acetaldehyde and D-glyceraldehyde 3-phosphate to generate 2-deoxy-D-ribose 5-phosphate. This is Deoxyribose-phosphate aldolase from Bacillus cereus (strain AH187).